The sequence spans 68 residues: Large ribosomal subunit protein bL35 (68 aa).

Belongs to the bacterial ribosomal protein bL35 family.

This is Large ribosomal subunit protein bL35 from Onion yellows phytoplasma (strain OY-M).